Consider the following 298-residue polypeptide: Oxygen-dependent coproporphyrinogen-III oxidase (298 aa).

Serine 90 is a binding site for substrate. Residues histidine 94 and histidine 104 each coordinate a divalent metal cation. The active-site Proton donor is histidine 104. 106 to 108 (NVR) contacts substrate. A divalent metal cation is bound by residues histidine 143 and histidine 173. The tract at residues 238 to 273 (YVEFNLVWDRGTLFGLQSGGRTESILMSLPPIVKWR) is important for dimerization. 256–258 (GGR) is a substrate binding site.

This sequence belongs to the aerobic coproporphyrinogen-III oxidase family. In terms of assembly, homodimer. It depends on a divalent metal cation as a cofactor.

It is found in the cytoplasm. It carries out the reaction coproporphyrinogen III + O2 + 2 H(+) = protoporphyrinogen IX + 2 CO2 + 2 H2O. It participates in porphyrin-containing compound metabolism; protoporphyrin-IX biosynthesis; protoporphyrinogen-IX from coproporphyrinogen-III (O2 route): step 1/1. Functionally, involved in the heme biosynthesis. Catalyzes the aerobic oxidative decarboxylation of propionate groups of rings A and B of coproporphyrinogen-III to yield the vinyl groups in protoporphyrinogen-IX. This Dechloromonas aromatica (strain RCB) protein is Oxygen-dependent coproporphyrinogen-III oxidase.